A 340-amino-acid chain; its full sequence is Uroporphyrinogen decarboxylase (340 aa).

Residues 23–27, D72, Y147, T202, and H316 each bind substrate; that span reads RQAGR.

This sequence belongs to the uroporphyrinogen decarboxylase family. As to quaternary structure, homodimer.

The protein localises to the cytoplasm. The enzyme catalyses uroporphyrinogen III + 4 H(+) = coproporphyrinogen III + 4 CO2. Its pathway is porphyrin-containing compound metabolism; protoporphyrin-IX biosynthesis; coproporphyrinogen-III from 5-aminolevulinate: step 4/4. Its function is as follows. Catalyzes the decarboxylation of four acetate groups of uroporphyrinogen-III to yield coproporphyrinogen-III. This is Uroporphyrinogen decarboxylase from Geobacter metallireducens (strain ATCC 53774 / DSM 7210 / GS-15).